The following is a 260-amino-acid chain: Alpha-acetolactate decarboxylase (260 aa).

This sequence belongs to the alpha-acetolactate decarboxylase family.

It carries out the reaction (2S)-2-acetolactate + H(+) = (R)-acetoin + CO2. It participates in polyol metabolism; (R,R)-butane-2,3-diol biosynthesis; (R,R)-butane-2,3-diol from pyruvate: step 2/3. Its function is as follows. Converts acetolactate into acetoin, which can be excreted by the cells. This may be a mechanism for controlling the internal pH of cells in the stationary stage. The protein is Alpha-acetolactate decarboxylase (budA) of Klebsiella aerogenes (Enterobacter aerogenes).